The chain runs to 182 residues: RFKKIRRLGALPGLTSKRPRSGIDLKNQLRSGKRSQYRIRLEEKQKLRFHYGLTERQLLKYVHIAGKAKGSTGQVLLQLLEMRLDNILFRLGMASTIPGARQLVNHRHILVNGRIVDIPSYRCKPRDIITTKDKERSKVLIQNYIASSPHEELPNHLTIDPLQYKGLVNQIIDSKWIGLKIN.

The region spanning Met-82 to Asn-143 is the S4 RNA-binding domain.

The protein belongs to the universal ribosomal protein uS4 family. In terms of assembly, part of the 30S ribosomal subunit. Contacts protein S5. The interaction surface between S4 and S5 is involved in control of translational fidelity.

Its subcellular location is the plastid. It localises to the chloroplast. Its function is as follows. One of the primary rRNA binding proteins, it binds directly to 16S rRNA where it nucleates assembly of the body of the 30S subunit. In terms of biological role, with S5 and S12 plays an important role in translational accuracy. The protein is Small ribosomal subunit protein uS4c (rps4) of Tigridia sp. (strain Lejeune 1997).